The following is a 74-amino-acid chain: Cytochrome b559 subunit alpha (74 aa).

Residues 22 to 36 form a helical membrane-spanning segment; it reads VIHTVTIPSLFVAGW. Histidine 24 contacts heme.

Belongs to the PsbE/PsbF family. As to quaternary structure, heterodimer of an alpha subunit and a beta subunit. PSII is composed of 1 copy each of membrane proteins PsbA, PsbB, PsbC, PsbD, PsbE, PsbF, PsbH, PsbI, PsbJ, PsbK, PsbL, PsbM, PsbT, PsbX, PsbY, PsbZ, Psb30/Ycf12, at least 3 peripheral proteins of the oxygen-evolving complex and a large number of cofactors. It forms dimeric complexes. Heme b serves as cofactor.

The protein localises to the plastid. Its subcellular location is the cyanelle thylakoid membrane. Its function is as follows. This b-type cytochrome is tightly associated with the reaction center of photosystem II (PSII). PSII is a light-driven water:plastoquinone oxidoreductase that uses light energy to abstract electrons from H(2)O, generating O(2) and a proton gradient subsequently used for ATP formation. It consists of a core antenna complex that captures photons, and an electron transfer chain that converts photonic excitation into a charge separation. This Cyanophora paradoxa protein is Cytochrome b559 subunit alpha.